Consider the following 273-residue polypeptide: Dermonecrotic toxin LapSicTox-alphaIB1b3 (273 aa).

The active site involves H5. Mg(2+) is bound by residues E25 and D27. The active-site Nucleophile is the H41. Intrachain disulfides connect C45/C51 and C47/C190. D85 is a binding site for Mg(2+). N-linked (GlcNAc...) asparagine glycosylation is present at N250.

This sequence belongs to the arthropod phospholipase D family. Class II subfamily. Mg(2+) is required as a cofactor. In terms of tissue distribution, expressed by the venom gland.

Its subcellular location is the secreted. It carries out the reaction an N-(acyl)-sphingosylphosphocholine = an N-(acyl)-sphingosyl-1,3-cyclic phosphate + choline. The catalysed reaction is an N-(acyl)-sphingosylphosphoethanolamine = an N-(acyl)-sphingosyl-1,3-cyclic phosphate + ethanolamine. It catalyses the reaction a 1-acyl-sn-glycero-3-phosphocholine = a 1-acyl-sn-glycero-2,3-cyclic phosphate + choline. The enzyme catalyses a 1-acyl-sn-glycero-3-phosphoethanolamine = a 1-acyl-sn-glycero-2,3-cyclic phosphate + ethanolamine. In terms of biological role, dermonecrotic toxins cleave the phosphodiester linkage between the phosphate and headgroup of certain phospholipids (sphingolipid and lysolipid substrates), forming an alcohol (often choline) and a cyclic phosphate. This toxin acts on sphingomyelin (SM). It may also act on ceramide phosphoethanolamine (CPE), lysophosphatidylcholine (LPC) and lysophosphatidylethanolamine (LPE), but not on lysophosphatidylserine (LPS), and lysophosphatidylglycerol (LPG). It acts by transphosphatidylation, releasing exclusively cyclic phosphate products as second products. Induces dermonecrosis, hemolysis, increased vascular permeability, edema, inflammatory response, and platelet aggregation. This is Dermonecrotic toxin LapSicTox-alphaIB1b3 from Loxosceles apachea (Apache recluse spider).